A 448-amino-acid polypeptide reads, in one-letter code: Binary larvicide subunit BinB (448 aa).

Positions 1-198 (MCDSKDNSGV…TAFVNSSFYA (198 aa)) are beta-trefoil domain. A disulfide bond links C67 and C161. Residues 199–448 (AAIPQLPQTS…NEELIPKINQ (250 aa)) are probable pore-forming domain.

The protein belongs to the toxin_10 family. As to quaternary structure, forms a heterodimer with BinA. Upon toxin crystal solubilization with NaOH at pH 12, only the 63-kDa (binB) and 43-kDa (binA) proteins were detected. Interacts with mosquito protein Cpm1 which acts as its host receptor. Processed by proteases extracted from C.pipiens larval gut; unlike its partner BinA, it does not form a stable digestion product.

The protein resides in the spore. Its subcellular location is the perispore. Its function is as follows. Component of a binary toxin active against Culex and some Aedes mosquito larvae. This subunit alone has no toxic larvicidal activity. This subunit is responsible for localized binding to specific regions of the host larval gut. Binary toxin internalization into host gut cells requires both proteins. This chain is Binary larvicide subunit BinB (binB), found in Lysinibacillus sphaericus (Bacillus sphaericus).